Here is a 474-residue protein sequence, read N- to C-terminus: tRNA-2-methylthio-N(6)-dimethylallyladenosine synthase (474 aa).

The 118-residue stretch at 3-120 (QKLHIKTWGC…LPEMINQIRG (118 aa)) folds into the MTTase N-terminal domain. 6 residues coordinate [4Fe-4S] cluster: C12, C49, C83, C157, C161, and C164. The Radical SAM core domain maps to 143–375 (RAEGPTAFVS…QERINQQAAQ (233 aa)). The 64-residue stretch at 378-441 (RRMLGTEQRV…TNSLRGEVVR (64 aa)) folds into the TRAM domain.

Belongs to the methylthiotransferase family. MiaB subfamily. As to quaternary structure, monomer. The cofactor is [4Fe-4S] cluster.

The protein resides in the cytoplasm. It catalyses the reaction N(6)-dimethylallyladenosine(37) in tRNA + (sulfur carrier)-SH + AH2 + 2 S-adenosyl-L-methionine = 2-methylsulfanyl-N(6)-dimethylallyladenosine(37) in tRNA + (sulfur carrier)-H + 5'-deoxyadenosine + L-methionine + A + S-adenosyl-L-homocysteine + 2 H(+). Functionally, catalyzes the methylthiolation of N6-(dimethylallyl)adenosine (i(6)A), leading to the formation of 2-methylthio-N6-(dimethylallyl)adenosine (ms(2)i(6)A) at position 37 in tRNAs that read codons beginning with uridine. This is tRNA-2-methylthio-N(6)-dimethylallyladenosine synthase from Haemophilus influenzae (strain PittGG).